A 239-amino-acid polypeptide reads, in one-letter code: tRNA (guanine-N(7)-)-methyltransferase (239 aa).

Residues E69, E94, D121, and D144 each coordinate S-adenosyl-L-methionine. D144 is an active-site residue. Substrate-binding positions include K148, D180, and 217–220 (TKFE).

This sequence belongs to the class I-like SAM-binding methyltransferase superfamily. TrmB family. In terms of assembly, monomer.

The enzyme catalyses guanosine(46) in tRNA + S-adenosyl-L-methionine = N(7)-methylguanosine(46) in tRNA + S-adenosyl-L-homocysteine. It functions in the pathway tRNA modification; N(7)-methylguanine-tRNA biosynthesis. Its function is as follows. Catalyzes the formation of N(7)-methylguanine at position 46 (m7G46) in tRNA. The protein is tRNA (guanine-N(7)-)-methyltransferase of Buchnera aphidicola subsp. Acyrthosiphon pisum (strain 5A).